The following is a 986-amino-acid chain: Ubiquitin carboxyl-terminal hydrolase 37 (986 aa).

The KEN box 1 signature appears at 32–34; the sequence is KDN. Short sequence motifs (D-box) lie at residues 71-79 and 96-105; these read CLMLTLKDT and RMYLDAVHQD. Disordered regions lie at residues 134-238 and 251-305; these read NRQF…MSDP and LKLK…KRSL. The segment covering 149-159 has biased composition (basic and acidic residues); the sequence is VTVESKDETPF. A D-box 3 motif is present at residues 160 to 168; the sequence is RKVLGTPAR. Polar residues predominate over residues 171 to 195; it reads VKNSSGTGAPSNRVNVAASPTSSVP. The KEN box 2 signature appears at 224-226; it reads KEN. A compositionally biased stretch (basic and acidic residues) spans 251-260; the sequence is LKLKQEEENR. The span at 269–298 shows a compositional bias: low complexity; that stretch reads SSSYYGSRSSSKEYSTSSSTLDRSSVSSQT. A USP domain is found at 344–958; the sequence is QGFSNLGNTC…SGYIFFYMHK (615 aa). Residue Cys-353 is the Nucleophile of the active site. 2 disordered regions span residues 683 to 710 and 729 to 751; these read VQRG…GFDG and SLSL…GDDE. A UIM 1 domain is found at 712 to 731; it reads SEDELLAAVLEISKREASLS. Residues 729-739 are compositionally biased toward basic and acidic residues; sequence SLSLSHDEDKP. Positions 789-791 match the KEN box 3 motif; it reads KEN. The segment at 811-840 is disordered; sequence REREEQELQQALAQSLQEQEAREQKEDDDL. UIM domains are found at residues 813–832 and 835–854; these read REEQ…QEAR and KEDD…FNSS. The span at 818 to 828 shows a compositional bias: low complexity; it reads LQQALAQSLQE. Over residues 829–840 the composition is skewed to basic and acidic residues; it reads QEAREQKEDDDL. His-913 serves as the catalytic Proton acceptor.

The protein belongs to the peptidase C19 family.

It catalyses the reaction Thiol-dependent hydrolysis of ester, thioester, amide, peptide and isopeptide bonds formed by the C-terminal Gly of ubiquitin (a 76-residue protein attached to proteins as an intracellular targeting signal).. Functionally, deubiquitinase that antagonizes the anaphase-promoting complex (APC/C) during G1/S transition by mediating deubiquitination of APC/C target proteins, thereby promoting S phase entry. Specifically mediates deubiquitination of 'Lys-11'-linked polyubiquitin chains, a specific ubiquitin-linkage type mediated by the APC/C complex. In Gallus gallus (Chicken), this protein is Ubiquitin carboxyl-terminal hydrolase 37 (USP37).